Reading from the N-terminus, the 237-residue chain is Class B acid phosphatase (237 aa).

Residues 1–23 (MKKITLALSAVCLLFTLNHSANA) form the signal peptide. The active-site Nucleophile is the D69. Residues D69 and D71 each contribute to the Mg(2+) site. D71 serves as the catalytic Proton donor. Residues 137–138 (TG) and K177 contribute to the substrate site. D192 contributes to the Mg(2+) binding site.

It belongs to the class B bacterial acid phosphatase family. As to quaternary structure, homotetramer. The cofactor is Mg(2+).

Its subcellular location is the periplasm. It catalyses the reaction a phosphate monoester + H2O = an alcohol + phosphate. Functionally, dephosphorylates several organic phosphate monoesters. Also has a phosphotransferase activity catalyzing the transfer of low-energy phosphate groups from organic phosphate monoesters to free hydroxyl groups of various organic compounds. The sequence is that of Class B acid phosphatase from Salmonella arizonae (strain ATCC BAA-731 / CDC346-86 / RSK2980).